Consider the following 362-residue polypeptide: tRNA-specific 2-thiouridylase MnmA (362 aa).

ATP contacts are provided by residues 13–20 (GLSGGVDS) and M39. The interval 99–101 (NPD) is interaction with target base in tRNA. Residue C104 is the Nucleophile of the active site. An intrachain disulfide couples C104 to C200. Residue G128 coordinates ATP. The interval 150–152 (KDQ) is interaction with tRNA. C200 functions as the Cysteine persulfide intermediate in the catalytic mechanism. An interaction with tRNA region spans residues 310 to 311 (RY).

Belongs to the MnmA/TRMU family.

The protein resides in the cytoplasm. The enzyme catalyses S-sulfanyl-L-cysteinyl-[protein] + uridine(34) in tRNA + AH2 + ATP = 2-thiouridine(34) in tRNA + L-cysteinyl-[protein] + A + AMP + diphosphate + H(+). Functionally, catalyzes the 2-thiolation of uridine at the wobble position (U34) of tRNA, leading to the formation of s(2)U34. This Vesicomyosocius okutanii subsp. Calyptogena okutanii (strain HA) protein is tRNA-specific 2-thiouridylase MnmA.